The primary structure comprises 501 residues: Aspartate--tRNA ligase, cytoplasmic (501 aa).

Phosphothreonine is present on T52. Residue K74 is modified to N6-acetyllysine. Residue E229 participates in L-aspartate binding. Residue S249 is modified to Phosphoserine. Residues 251–254 (QLYK) form an aspartate region. Position 273 (R273) interacts with L-aspartate. ATP contacts are provided by residues 273–275 (RAE) and 281–283 (RHL). K374 is subject to N6-acetyllysine. Position 424 (E424) interacts with ATP. Residues S427 and R431 each contribute to the L-aspartate site. 472–475 (GLER) serves as a coordination point for ATP.

This sequence belongs to the class-II aminoacyl-tRNA synthetase family. Type 2 subfamily. Homodimer. Part of a multisubunit complex that groups tRNA ligases for Arg (RARS1), Asp (DARS1), Gln (QARS1), Ile (IARS1), Leu (LARS1), Lys (KARS1), Met (MARS1) the bifunctional ligase for Glu and Pro (EPRS1) and the auxiliary subunits AIMP1/p43, AIMP2/p38 and EEF1E1/p18.

It localises to the cytoplasm. The enzyme catalyses tRNA(Asp) + L-aspartate + ATP = L-aspartyl-tRNA(Asp) + AMP + diphosphate. In terms of biological role, catalyzes the specific attachment of an amino acid to its cognate tRNA in a 2 step reaction: the amino acid (AA) is first activated by ATP to form AA-AMP and then transferred to the acceptor end of the tRNA. In Mus musculus (Mouse), this protein is Aspartate--tRNA ligase, cytoplasmic (Dars1).